Here is a 201-residue protein sequence, read N- to C-terminus: Large ribosomal subunit protein uL4 (201 aa).

The interval 45 to 71 is disordered; it reads AQKTRAEVTGSGKKPWRQKGTGRARAG.

The protein belongs to the universal ribosomal protein uL4 family. Part of the 50S ribosomal subunit.

Its function is as follows. One of the primary rRNA binding proteins, this protein initially binds near the 5'-end of the 23S rRNA. It is important during the early stages of 50S assembly. It makes multiple contacts with different domains of the 23S rRNA in the assembled 50S subunit and ribosome. Functionally, forms part of the polypeptide exit tunnel. This chain is Large ribosomal subunit protein uL4, found in Shewanella halifaxensis (strain HAW-EB4).